A 217-amino-acid chain; its full sequence is GTP cyclohydrolase 1 (217 aa).

Residues Cys-109, His-112, and Cys-180 each coordinate Zn(2+).

It belongs to the GTP cyclohydrolase I family. In terms of assembly, homomer.

The enzyme catalyses GTP + H2O = 7,8-dihydroneopterin 3'-triphosphate + formate + H(+). It functions in the pathway cofactor biosynthesis; 7,8-dihydroneopterin triphosphate biosynthesis; 7,8-dihydroneopterin triphosphate from GTP: step 1/1. The polypeptide is GTP cyclohydrolase 1 (Aliivibrio salmonicida (strain LFI1238) (Vibrio salmonicida (strain LFI1238))).